Here is a 450-residue protein sequence, read N- to C-terminus: Hyaluronidase-1 (450 aa).

An N-terminal signal peptide occupies residues 1–35 (MRPFSLEVSLHLPWAMAAHLLPVCTLFLNLLSMTQ). Disulfide bonds link Cys-58–Cys-348 and Cys-222–Cys-236. N-linked (GlcNAc...) asparagine glycosylation occurs at Asn-85. Residue Glu-146 is the Proton donor of the active site. Residues Asn-231 and Asn-365 are each glycosylated (N-linked (GlcNAc...) asparagine). 3 disulfide bridges follow: Cys-373-Cys-384, Cys-378-Cys-433, and Cys-435-Cys-444. N-linked (GlcNAc...) asparagine glycosylation is present at Asn-398. The EGF-like domain occupies 433 to 444 (CRCYRGWRGTRC).

Belongs to the glycosyl hydrolase 56 family.

Its subcellular location is the secreted. The protein resides in the lysosome. It carries out the reaction Random hydrolysis of (1-&gt;4)-linkages between N-acetyl-beta-D-glucosamine and D-glucuronate residues in hyaluronate.. May have a role in promoting tumor progression. May block the TGFB1-enhanced cell growth. The polypeptide is Hyaluronidase-1 (HYAL1) (Bos taurus (Bovine)).